A 310-amino-acid chain; its full sequence is Regulator of microtubule dynamics protein 1 (310 aa).

Lysine 165 carries the post-translational modification N6-succinyllysine. 2 TPR repeats span residues 168–204 (AICI…NPKD) and 222–258 (PWYQ…DPNF).

The protein belongs to the RMDN family. Interacts with microtubules.

The protein resides in the cytoplasm. Its subcellular location is the cytoskeleton. The protein localises to the spindle. It localises to the spindle pole. The sequence is that of Regulator of microtubule dynamics protein 1 (Rmdn1) from Rattus norvegicus (Rat).